The primary structure comprises 379 residues: Bifunctional riboflavin kinase/FMN phosphatase (379 aa).

Ser2 is modified (N-acetylserine). Asp17 serves as the catalytic Nucleophile; for FMN phosphatase activity. Positions 17 and 19 each coordinate Mg(2+). The Proton donor; for FMN phosphatase activity role is filled by Asp19. Positions 248, 254, 260, and 262 each coordinate ATP. Residue Thr260 participates in Mg(2+) binding. The active-site Nucleophile; for riboflavin kinase activity is the Glu312. Positions 315, 317, and 324 each coordinate ATP. FMN is bound by residues Arg337 and Phe342.

The protein in the N-terminal section; belongs to the HAD-like hydrolase superfamily. CbbY/CbbZ/Gph/YieH family. In the C-terminal section; belongs to the flavokinase family. As to quaternary structure, monomer. The cofactor is Mg(2+).

It catalyses the reaction riboflavin + ATP = FMN + ADP + H(+). The catalysed reaction is FMN + H2O = riboflavin + phosphate. Its pathway is cofactor biosynthesis; FMN biosynthesis; FMN from riboflavin (ATP route): step 1/1. Bifunctional enzyme that catalyzes the hydrolysis of flavin-mononucleotide (FMN) to riboflavin (vitamin B2) and the phosphorylation of riboflavin to form (FMN) coenzyme. The protein is Bifunctional riboflavin kinase/FMN phosphatase of Arabidopsis thaliana (Mouse-ear cress).